Consider the following 78-residue polypeptide: Broad mercury transporter MerE (78 aa).

Helical transmembrane passes span 19–39 (LWGA…AAVL) and 47–67 (FLGE…VLAV).

The protein localises to the cell inner membrane. Broad mercury transporter that mediates the transport of both CH(3)Hg(I) and Hg(II) across the membrane. The sequence is that of Broad mercury transporter MerE from Shigella flexneri.